Consider the following 589-residue polypeptide: Protein FAM117B (589 aa).

Residues methionine 1 to histidine 310 form a disordered region. Phosphoserine is present on serine 10. Residues serine 16 to glycine 29 show a composition bias toward gly residues. Residues glutamine 45–arginine 56 are compositionally biased toward low complexity. The segment covering serine 57 to proline 85 has biased composition (gly residues). At serine 106 the chain carries Phosphoserine. Low complexity predominate over residues threonine 108–serine 136. The segment covering proline 137 to leucine 146 has biased composition (pro residues). Composition is skewed to low complexity over residues leucine 147 to threonine 158 and proline 207 to serine 220. Phosphoserine occurs at positions 210, 219, 220, and 273. Over residues arginine 292 to aspartate 302 the composition is skewed to basic residues. Phosphoserine is present on residues serine 345 and serine 391. 2 disordered regions span residues glutamine 370–tyrosine 464 and serine 556–glycine 589. Polar residues predominate over residues glutamine 384–proline 397. A compositionally biased stretch (low complexity) spans serine 404–serine 417. Phosphoserine occurs at positions 449 and 457.

The sequence is that of Protein FAM117B (FAM117B) from Homo sapiens (Human).